We begin with the raw amino-acid sequence, 487 residues long: Protein nucleotidyltransferase YdiU (487 aa).

Positions 90, 92, 93, 113, 125, 126, 176, and 183 each coordinate ATP. Residue Asp252 is the Proton acceptor of the active site. Mg(2+)-binding residues include Asn253 and Asp262. An ATP-binding site is contributed by Asp262.

The protein belongs to the SELO family. Requires Mg(2+) as cofactor. It depends on Mn(2+) as a cofactor.

It catalyses the reaction L-seryl-[protein] + ATP = 3-O-(5'-adenylyl)-L-seryl-[protein] + diphosphate. It carries out the reaction L-threonyl-[protein] + ATP = 3-O-(5'-adenylyl)-L-threonyl-[protein] + diphosphate. The enzyme catalyses L-tyrosyl-[protein] + ATP = O-(5'-adenylyl)-L-tyrosyl-[protein] + diphosphate. The catalysed reaction is L-histidyl-[protein] + UTP = N(tele)-(5'-uridylyl)-L-histidyl-[protein] + diphosphate. It catalyses the reaction L-seryl-[protein] + UTP = O-(5'-uridylyl)-L-seryl-[protein] + diphosphate. It carries out the reaction L-tyrosyl-[protein] + UTP = O-(5'-uridylyl)-L-tyrosyl-[protein] + diphosphate. Its function is as follows. Nucleotidyltransferase involved in the post-translational modification of proteins. It can catalyze the addition of adenosine monophosphate (AMP) or uridine monophosphate (UMP) to a protein, resulting in modifications known as AMPylation and UMPylation. This chain is Protein nucleotidyltransferase YdiU, found in Pseudomonas syringae pv. syringae (strain B728a).